The following is a 104-amino-acid chain: Phosphoribosyl-ATP pyrophosphatase (104 aa).

It belongs to the PRA-PH family.

The protein resides in the cytoplasm. The enzyme catalyses 1-(5-phospho-beta-D-ribosyl)-ATP + H2O = 1-(5-phospho-beta-D-ribosyl)-5'-AMP + diphosphate + H(+). The protein operates within amino-acid biosynthesis; L-histidine biosynthesis; L-histidine from 5-phospho-alpha-D-ribose 1-diphosphate: step 2/9. The protein is Phosphoribosyl-ATP pyrophosphatase of Methanosarcina barkeri (strain Fusaro / DSM 804).